The primary structure comprises 330 residues: Probable deoxyhypusine synthase (330 aa).

K303 acts as the Nucleophile in catalysis.

Belongs to the deoxyhypusine synthase family. NAD(+) serves as cofactor.

The catalysed reaction is [eIF5A protein]-L-lysine + spermidine = [eIF5A protein]-deoxyhypusine + propane-1,3-diamine. Its pathway is protein modification; eIF5A hypusination. In terms of biological role, catalyzes the NAD-dependent oxidative cleavage of spermidine and the subsequent transfer of the butylamine moiety of spermidine to the epsilon-amino group of a specific lysine residue of the eIF-5A precursor protein to form the intermediate deoxyhypusine residue. In Methanocaldococcus jannaschii (strain ATCC 43067 / DSM 2661 / JAL-1 / JCM 10045 / NBRC 100440) (Methanococcus jannaschii), this protein is Probable deoxyhypusine synthase (dys).